The primary structure comprises 59 residues: Dybowskin-1CDYa (59 aa).

An N-terminal signal peptide occupies residues 1 to 22 (MFTLKKSLLLLFFLGTINFSLC). Residues 23–44 (EEERNAEEERRDYPEERDVEVE) constitute a propeptide that is removed on maturation.

Belongs to the frog skin active peptide (FSAP) family. Brevinin subfamily. As to expression, expressed by the skin glands.

Its subcellular location is the secreted. In terms of biological role, antimicrobial peptide. Has activity against the Gram-positive bacterium S.aureus (MIC=6 uM) and the Gram-negative bacterium E.coli (MIC=3 uM). Lacks hemolytic activity against human erythrocytes. The chain is Dybowskin-1CDYa from Rana dybowskii (Dybovsky's frog).